The following is a 201-amino-acid chain: 3-isopropylmalate dehydratase small subunit 1 (201 aa).

It belongs to the LeuD family. LeuD type 1 subfamily. In terms of assembly, heterodimer of LeuC and LeuD.

The catalysed reaction is (2R,3S)-3-isopropylmalate = (2S)-2-isopropylmalate. The protein operates within amino-acid biosynthesis; L-leucine biosynthesis; L-leucine from 3-methyl-2-oxobutanoate: step 2/4. Catalyzes the isomerization between 2-isopropylmalate and 3-isopropylmalate, via the formation of 2-isopropylmaleate. The polypeptide is 3-isopropylmalate dehydratase small subunit 1 (Salmonella typhimurium (strain LT2 / SGSC1412 / ATCC 700720)).